Reading from the N-terminus, the 373-residue chain is Septin homolog spn3 (373 aa).

Positions 10 to 286 (KGIPLNLMVV…ETYRTEKLST (277 aa)) constitute a Septin-type G domain. Positions 20-27 (GDVGLGRT) are G1 motif. Position 20–27 (20–27 (GDVGLGRT)) interacts with GTP. Positions 79–82 (DTPH) are G3 motif. The tract at residues 161–164 (AKAD) is G4 motif. GTP is bound by residues 162-170 (KADSLTAQE) and R235. S303 bears the Phosphoserine mark. A coiled-coil region spans residues 311 to 357 (EDRLRAIELSVQKEIEEKRRQLLAREEALRALEEKLAASTAAMANAS).

Belongs to the TRAFAC class TrmE-Era-EngA-EngB-Septin-like GTPase superfamily. Septin GTPase family. Component of the septin complex composed of two copies of each spn1, spn2, spn3 and spn4.

Its subcellular location is the cytoplasm. The protein resides in the cell cortex. Its function is as follows. Plays a role in the cell cycle. Involved in a late stage of septum formation leading to the separation of the daughter cells. This is Septin homolog spn3 (spn3) from Schizosaccharomyces pombe (strain 972 / ATCC 24843) (Fission yeast).